Reading from the N-terminus, the 931-residue chain is Protein phosphatase 1 regulatory subunit 37 homolog (931 aa).

Residues threonine 20–alanine 71 form a disordered region. The segment covering proline 41 to serine 51 has biased composition (polar residues). LRR repeat units lie at residues alanine 232–alanine 259, serine 262–cysteine 285, asparagine 290–leucine 314, leucine 323–arginine 346, lysine 351–glutamate 374, asparagine 379–asparagine 407, histidine 409–glutamate 430, and asparagine 435–serine 458. The span at glutamine 519–alanine 533 shows a compositional bias: basic and acidic residues. Disordered stretches follow at residues glutamine 519–arginine 602 and proline 780–arginine 807. Acidic residues predominate over residues aspartate 534–threonine 547. Over residues serine 554–serine 563 the composition is skewed to low complexity. 2 stretches are compositionally biased toward basic and acidic residues: residues proline 564–proline 584 and threonine 790–arginine 807.

The protein belongs to the PPP1R37 family.

The chain is Protein phosphatase 1 regulatory subunit 37 homolog from Caenorhabditis briggsae.